The primary structure comprises 451 residues: Chromosomal replication initiator protein DnaA (451 aa).

A domain I, interacts with DnaA modulators region spans residues 1–71; that stretch reads MSEKEIWDKV…QAIIYDVIGY (71 aa). Residues 71–112 are domain II; sequence YEVKPHFISEDELASYNNVNTQEVQEPQVQHSSIDDKTWGKE. The tract at residues 113–329 is domain III, AAA+ region; that stretch reads QFNMHNTFDT…GALTRLLAYS (217 aa). ATP contacts are provided by Gly157, Gly159, Lys160, and Thr161. The tract at residues 330-451 is domain IV, binds dsDNA; that stretch reads KLQGKPITTE…ENLEKEIRNQ (122 aa).

Belongs to the DnaA family. In terms of assembly, oligomerizes as a right-handed, spiral filament on DNA at oriC.

It is found in the cytoplasm. Plays an essential role in the initiation and regulation of chromosomal replication. ATP-DnaA binds to the origin of replication (oriC) to initiate formation of the DNA replication initiation complex once per cell cycle. Binds the DnaA box (a 9 base pair repeat at the origin) and separates the double-stranded (ds)DNA. Forms a right-handed helical filament on oriC DNA; dsDNA binds to the exterior of the filament while single-stranded (ss)DNA is stabiized in the filament's interior. The ATP-DnaA-oriC complex binds and stabilizes one strand of the AT-rich DNA unwinding element (DUE), permitting loading of DNA polymerase. After initiation quickly degrades to an ADP-DnaA complex that is not apt for DNA replication. Binds acidic phospholipids. This chain is Chromosomal replication initiator protein DnaA, found in Staphylococcus epidermidis (strain ATCC 12228 / FDA PCI 1200).